A 253-amino-acid polypeptide reads, in one-letter code: 5'-nucleotidase SurE (253 aa).

The a divalent metal cation site is built by aspartate 8, aspartate 9, serine 39, and asparagine 91.

Belongs to the SurE nucleotidase family. A divalent metal cation serves as cofactor.

The protein localises to the cytoplasm. The catalysed reaction is a ribonucleoside 5'-phosphate + H2O = a ribonucleoside + phosphate. In terms of biological role, nucleotidase that shows phosphatase activity on nucleoside 5'-monophosphates. In Leptothrix cholodnii (strain ATCC 51168 / LMG 8142 / SP-6) (Leptothrix discophora (strain SP-6)), this protein is 5'-nucleotidase SurE.